A 62-amino-acid chain; its full sequence is UPF0434 protein FTM_0733 (62 aa).

It belongs to the UPF0434 family.

This is UPF0434 protein FTM_0733 from Francisella tularensis subsp. mediasiatica (strain FSC147).